A 355-amino-acid chain; its full sequence is MENKRKQKDEIVLVNGSNDTTPNKKQKNELQVVSSGGGREIILGTERTSKLEHPIMQLIGHKGEIYSCKFNSYGTALASGGSDKEIFLWNVYGECINYSVLKGHKGTILELHWSTDSNEIYTACTDKSIGVWDSNKGELIKRIREHSGVVNSCCPARRGPPLVASGSDDRSARIFDTRSKGSTHLFQHKYPVTSVCFSDASDQLITGGIDNVIRVWDIRNQEDPLYTLASHQDTITSTSVSKDGAYLLSNSMDNSCKIWDIRPYAPPNRNIKTFNGAQNNFEKNLIKSSWSIDGRRIGCGSSDRQVYIWDTNTKQLQYCLPGHSGTVNEVTFHPNEPIIASCSSDKTIYLGEIKP.

7 WD repeats span residues glycine 60 to serine 99, glycine 103 to arginine 142, glutamate 145 to leucine 185, glutamine 187 to tyrosine 226, serine 230 to arginine 269, asparagine 280 to cysteine 319, and glycine 322 to proline 355.

Component of the pre-catalytic and catalytic spliceosome complexes. Component of the postcatalytic spliceosome P complex. Part of the U5 snRNP complex. Component of the U4/U6-U5 tri-snRNP complex.

The protein resides in the nucleus. Functionally, required for pre-mRNA splicing as component of the activated spliceosome. Component of the U5 small nuclear ribonucleoprotein (snRNP) complex and the U4/U6-U5 tri-snRNP complex, building blocks of the spliceosome. This Dictyostelium discoideum (Social amoeba) protein is U5 small nuclear ribonucleoprotein 40 kDa protein (snrnp40).